The primary structure comprises 345 residues: Selenide, water dikinase (345 aa).

Residue cysteine 15 is part of the active site. ATP is bound by residues lysine 18 and 46–48 (SKD). Aspartate 49 is a Mg(2+) binding site. ATP is bound by residues aspartate 66, aspartate 89, and 137-139 (GHS). Aspartate 89 lines the Mg(2+) pocket. Residue aspartate 225 coordinates Mg(2+).

Belongs to the selenophosphate synthase 1 family. Class I subfamily. Homodimer. Requires Mg(2+) as cofactor.

The enzyme catalyses hydrogenselenide + ATP + H2O = selenophosphate + AMP + phosphate + 2 H(+). Functionally, synthesizes selenophosphate from selenide and ATP. This Aeromonas hydrophila subsp. hydrophila (strain ATCC 7966 / DSM 30187 / BCRC 13018 / CCUG 14551 / JCM 1027 / KCTC 2358 / NCIMB 9240 / NCTC 8049) protein is Selenide, water dikinase.